We begin with the raw amino-acid sequence, 62 residues long: Large ribosomal subunit protein bL32 (62 aa).

This sequence belongs to the bacterial ribosomal protein bL32 family.

This Levilactobacillus brevis (strain ATCC 367 / BCRC 12310 / CIP 105137 / JCM 1170 / LMG 11437 / NCIMB 947 / NCTC 947) (Lactobacillus brevis) protein is Large ribosomal subunit protein bL32.